The primary structure comprises 171 residues: Protein BTG1 (171 aa).

Ser-159 is subject to Phosphoserine.

The protein belongs to the BTG family. As to quaternary structure, interacts with CNOT7 and CNOT8.

In terms of biological role, anti-proliferative protein. The protein is Protein BTG1 (BTG1) of Bos taurus (Bovine).